A 140-amino-acid polypeptide reads, in one-letter code: ATP synthase epsilon chain 1 (140 aa).

It belongs to the ATPase epsilon chain family. In terms of assembly, F-type ATPases have 2 components, CF(1) - the catalytic core - and CF(0) - the membrane proton channel. CF(1) has five subunits: alpha(3), beta(3), gamma(1), delta(1), epsilon(1). CF(0) has three main subunits: a, b and c.

Its subcellular location is the cell inner membrane. Its function is as follows. Produces ATP from ADP in the presence of a proton gradient across the membrane. The protein is ATP synthase epsilon chain 1 of Methylococcus capsulatus (strain ATCC 33009 / NCIMB 11132 / Bath).